Here is a 244-residue protein sequence, read N- to C-terminus: 3-deoxy-manno-octulosonate cytidylyltransferase (244 aa).

The protein belongs to the KdsB family.

It localises to the cytoplasm. It carries out the reaction 3-deoxy-alpha-D-manno-oct-2-ulosonate + CTP = CMP-3-deoxy-beta-D-manno-octulosonate + diphosphate. It functions in the pathway nucleotide-sugar biosynthesis; CMP-3-deoxy-D-manno-octulosonate biosynthesis; CMP-3-deoxy-D-manno-octulosonate from 3-deoxy-D-manno-octulosonate and CTP: step 1/1. It participates in bacterial outer membrane biogenesis; lipopolysaccharide biosynthesis. Activates KDO (a required 8-carbon sugar) for incorporation into bacterial lipopolysaccharide in Gram-negative bacteria. In Wolinella succinogenes (strain ATCC 29543 / DSM 1740 / CCUG 13145 / JCM 31913 / LMG 7466 / NCTC 11488 / FDC 602W) (Vibrio succinogenes), this protein is 3-deoxy-manno-octulosonate cytidylyltransferase.